The following is a 745-amino-acid chain: Cytoskeleton-associated protein 2-like (745 aa).

Disordered regions lie at residues 26 to 305 (KGKL…VNRV), 319 to 362 (PATE…LGPQ), 422 to 483 (FPPQ…TYKR), and 608 to 638 (EAVT…PCPS). 2 stretches are compositionally biased toward polar residues: residues 67–89 (SKTT…ASQK) and 101–136 (GLTS…SRNP). The short motif at 183-185 (KEN) is the KEN box element. Residues 192–202 (KPEKPDPELHS) are compositionally biased toward basic and acidic residues. Residue Lys-195 forms a Glycyl lysine isopeptide (Lys-Gly) (interchain with G-Cter in SUMO1); alternate linkage. Lys-195 participates in a covalent cross-link: Glycyl lysine isopeptide (Lys-Gly) (interchain with G-Cter in SUMO2); alternate. Composition is skewed to polar residues over residues 205 to 216 (KPNTGSSNQTQK), 224 to 233 (LSKSSVTQTA), 242 to 253 (FIRNTQIRTQAV), and 284 to 301 (NKTQ…QDIT). Residues 427–442 (HFLNKTAPRTQASTAA) show a composition bias toward polar residues. The segment covering 459–475 (KKPEGEDRRKQLEEWQK) has biased composition (basic and acidic residues). Residues 608-624 (EAVTSDTSAAGTNTTSA) are compositionally biased toward polar residues. A Phosphoserine modification is found at Ser-745.

Belongs to the CKAP2 family. Post-translationally, ubiquitinated by the anaphase promoting complex/cyclosome (APC/C). As to expression, highly expressed in regions of active neurogenesis and neural stem/progenitor cells (NSPCs), both embryonic and adult, not detected in lung, liver, kidney, heart, and skeletal muscle.

The protein resides in the cytoplasm. The protein localises to the cytoskeleton. Its subcellular location is the spindle pole. Functionally, microtubule-associated protein required for mitotic spindle formation and cell-cycle progression in neural progenitor cells. The protein is Cytoskeleton-associated protein 2-like (Ckap2l) of Mus musculus (Mouse).